Reading from the N-terminus, the 397-residue chain is Enoyl-[acyl-carrier-protein] reductase [NADH] (397 aa).

Residues Gly-48–Tyr-53, Phe-74–Glu-75, Asp-111–Ala-112, and Val-139–Ala-140 each bind NAD(+). Tyr-225 provides a ligand contact to substrate. Tyr-235 serves as the catalytic Proton donor. Residues Lys-244 and Val-273 to Thr-275 contribute to the NAD(+) site.

The protein belongs to the TER reductase family. As to quaternary structure, monomer.

The catalysed reaction is a 2,3-saturated acyl-[ACP] + NAD(+) = a (2E)-enoyl-[ACP] + NADH + H(+). The protein operates within lipid metabolism; fatty acid biosynthesis. Functionally, involved in the final reduction of the elongation cycle of fatty acid synthesis (FAS II). Catalyzes the reduction of a carbon-carbon double bond in an enoyl moiety that is covalently linked to an acyl carrier protein (ACP). The polypeptide is Enoyl-[acyl-carrier-protein] reductase [NADH] (Burkholderia thailandensis (strain ATCC 700388 / DSM 13276 / CCUG 48851 / CIP 106301 / E264)).